The following is a 307-amino-acid chain: Aspartate carbamoyltransferase catalytic subunit (307 aa).

Positions 59 and 60 each coordinate carbamoyl phosphate. Residue K87 participates in L-aspartate binding. Positions 109, 137, and 140 each coordinate carbamoyl phosphate. 2 residues coordinate L-aspartate: R170 and R224. Positions 265 and 266 each coordinate carbamoyl phosphate.

The protein belongs to the aspartate/ornithine carbamoyltransferase superfamily. ATCase family. Heterododecamer (2C3:3R2) of six catalytic PyrB chains organized as two trimers (C3), and six regulatory PyrI chains organized as three dimers (R2).

The enzyme catalyses carbamoyl phosphate + L-aspartate = N-carbamoyl-L-aspartate + phosphate + H(+). Its pathway is pyrimidine metabolism; UMP biosynthesis via de novo pathway; (S)-dihydroorotate from bicarbonate: step 2/3. In terms of biological role, catalyzes the condensation of carbamoyl phosphate and aspartate to form carbamoyl aspartate and inorganic phosphate, the committed step in the de novo pyrimidine nucleotide biosynthesis pathway. In Cytophaga hutchinsonii (strain ATCC 33406 / DSM 1761 / CIP 103989 / NBRC 15051 / NCIMB 9469 / D465), this protein is Aspartate carbamoyltransferase catalytic subunit.